A 576-amino-acid polypeptide reads, in one-letter code: Capsid protein (576 aa).

A disordered region spans residues 489–576; sequence GYREPKPKPG…GLLALLKEKK (88 aa). The segment covering 496-509 has biased composition (pro residues); sequence KPGPPETLIPPGAP. Residues 520–537 are compositionally biased toward acidic residues; that stretch reads TESDDFDTGDSEEEEEDH. Over residues 538 to 551 the composition is skewed to basic and acidic residues; it reads QDPRWVRESLDKLT. The span at 562–576 shows a compositional bias: low complexity; it reads QQLGKGLLALLKEKK.

Belongs to the anelloviridae capsid protein family.

Its subcellular location is the virion. Functionally, self-assembles to form an icosahedral capsid with a T=1 symmetry, about 30 nm in diameter, and consisting of 60 capsid proteins. The capsid encapsulates the genomic DNA. Capsid protein is involved in attachment and entry into the host cell. The sequence is that of Capsid protein from Torque teno canis virus (isolate Cf-TTV10).